Here is a 769-residue protein sequence, read N- to C-terminus: Neprilysin-21 (769 aa).

The Cytoplasmic portion of the chain corresponds to 1–26 (MKPENGAATWHPAKRSCLGRLTTLET). The chain crosses the membrane as a helical; Signal-anchor for type II membrane protein span at residues 27–47 (LLLVFLGLLITALLSVLFLWL). Topologically, residues 48 to 769 (WVLDGYKTFT…MNPERKCQVW (722 aa)) are extracellular. Asn69 is a glycosylation site (N-linked (GlcNAc...) asparagine). Positions 85–769 (VCTSRECVRL…MNPERKCQVW (685 aa)) constitute a Peptidase M13 domain. 5 cysteine pairs are disulfide-bonded: Cys86-Cys91, Cys109-Cys754, Cys117-Cys714, Cys173-Cys428, and Cys638-Cys766. Residues Asn221, Asn240, Asn272, Asn307, Asn356, Asn412, and Asn506 are each glycosylated (N-linked (GlcNAc...) asparagine). Residue His601 coordinates Zn(2+). Residue Glu602 is part of the active site. Zn(2+) is bound by residues His605 and Glu663. Asp667 (proton donor) is an active-site residue. Residues Asn684 and Asn698 are each glycosylated (N-linked (GlcNAc...) asparagine).

This sequence belongs to the peptidase M13 family. The cofactor is Zn(2+).

The protein resides in the cell membrane. Probable cell surface protease. The protein is Neprilysin-21 (nep-21) of Caenorhabditis elegans.